Reading from the N-terminus, the 132-residue chain is Small ribosomal subunit protein uS8 (132 aa).

This sequence belongs to the universal ribosomal protein uS8 family. As to quaternary structure, part of the 30S ribosomal subunit. Contacts proteins S5 and S12.

One of the primary rRNA binding proteins, it binds directly to 16S rRNA central domain where it helps coordinate assembly of the platform of the 30S subunit. The sequence is that of Small ribosomal subunit protein uS8 from Oceanobacillus iheyensis (strain DSM 14371 / CIP 107618 / JCM 11309 / KCTC 3954 / HTE831).